The sequence spans 417 residues: Serine hydroxymethyltransferase (417 aa).

(6S)-5,6,7,8-tetrahydrofolate is bound by residues leucine 121 and 125–127 (GHL). Lysine 229 carries the N6-(pyridoxal phosphate)lysine modification. Position 355-357 (355-357 (SPF)) interacts with (6S)-5,6,7,8-tetrahydrofolate.

Belongs to the SHMT family. Homodimer. Pyridoxal 5'-phosphate serves as cofactor.

It localises to the cytoplasm. It catalyses the reaction (6R)-5,10-methylene-5,6,7,8-tetrahydrofolate + glycine + H2O = (6S)-5,6,7,8-tetrahydrofolate + L-serine. It participates in one-carbon metabolism; tetrahydrofolate interconversion. The protein operates within amino-acid biosynthesis; glycine biosynthesis; glycine from L-serine: step 1/1. In terms of biological role, catalyzes the reversible interconversion of serine and glycine with tetrahydrofolate (THF) serving as the one-carbon carrier. This reaction serves as the major source of one-carbon groups required for the biosynthesis of purines, thymidylate, methionine, and other important biomolecules. Also exhibits THF-independent aldolase activity toward beta-hydroxyamino acids, producing glycine and aldehydes, via a retro-aldol mechanism. The polypeptide is Serine hydroxymethyltransferase (Erwinia tasmaniensis (strain DSM 17950 / CFBP 7177 / CIP 109463 / NCPPB 4357 / Et1/99)).